We begin with the raw amino-acid sequence, 208 residues long: Hypoxanthine-guanine phosphoribosyltransferase (208 aa).

GMP is bound by residues Lys63, 122–130, Lys154, and Asp182; that span reads EDIVDSAIT. The active-site Proton acceptor is Asp126. Asp182 contacts Mg(2+).

This sequence belongs to the purine/pyrimidine phosphoribosyltransferase family. Mg(2+) is required as a cofactor.

It localises to the cytoplasm. It carries out the reaction IMP + diphosphate = hypoxanthine + 5-phospho-alpha-D-ribose 1-diphosphate. The catalysed reaction is GMP + diphosphate = guanine + 5-phospho-alpha-D-ribose 1-diphosphate. Its pathway is purine metabolism; IMP biosynthesis via salvage pathway; IMP from hypoxanthine: step 1/1. Functionally, converts guanine to guanosine monophosphate, and hypoxanthine to inosine monophosphate. Transfers the 5-phosphoribosyl group from 5-phosphoribosylpyrophosphate onto the purine. Plays a central role in the generation of purine nucleotides through the purine salvage pathway. The chain is Hypoxanthine-guanine phosphoribosyltransferase (HGPRT) from Crithidia fasciculata.